A 224-amino-acid chain; its full sequence is Thiamine-phosphate synthase (224 aa).

Residues 44–48 (QFREK) and N79 each bind 4-amino-2-methyl-5-(diphosphooxymethyl)pyrimidine. Residues D80 and D99 each contribute to the Mg(2+) site. Position 117 (S117) interacts with 4-amino-2-methyl-5-(diphosphooxymethyl)pyrimidine. Residue 143 to 145 (TET) coordinates 2-[(2R,5Z)-2-carboxy-4-methylthiazol-5(2H)-ylidene]ethyl phosphate. K146 provides a ligand contact to 4-amino-2-methyl-5-(diphosphooxymethyl)pyrimidine. 2-[(2R,5Z)-2-carboxy-4-methylthiazol-5(2H)-ylidene]ethyl phosphate contacts are provided by residues G175 and 195–196 (IS).

The protein belongs to the thiamine-phosphate synthase family. Mg(2+) serves as cofactor.

The catalysed reaction is 2-[(2R,5Z)-2-carboxy-4-methylthiazol-5(2H)-ylidene]ethyl phosphate + 4-amino-2-methyl-5-(diphosphooxymethyl)pyrimidine + 2 H(+) = thiamine phosphate + CO2 + diphosphate. It catalyses the reaction 2-(2-carboxy-4-methylthiazol-5-yl)ethyl phosphate + 4-amino-2-methyl-5-(diphosphooxymethyl)pyrimidine + 2 H(+) = thiamine phosphate + CO2 + diphosphate. The enzyme catalyses 4-methyl-5-(2-phosphooxyethyl)-thiazole + 4-amino-2-methyl-5-(diphosphooxymethyl)pyrimidine + H(+) = thiamine phosphate + diphosphate. It participates in cofactor biosynthesis; thiamine diphosphate biosynthesis; thiamine phosphate from 4-amino-2-methyl-5-diphosphomethylpyrimidine and 4-methyl-5-(2-phosphoethyl)-thiazole: step 1/1. Functionally, condenses 4-methyl-5-(beta-hydroxyethyl)thiazole monophosphate (THZ-P) and 2-methyl-4-amino-5-hydroxymethyl pyrimidine pyrophosphate (HMP-PP) to form thiamine monophosphate (TMP). This is Thiamine-phosphate synthase from Bacillus licheniformis (strain ATCC 14580 / DSM 13 / JCM 2505 / CCUG 7422 / NBRC 12200 / NCIMB 9375 / NCTC 10341 / NRRL NRS-1264 / Gibson 46).